Consider the following 196-residue polypeptide: N-(5'-phosphoribosyl)anthranilate isomerase (196 aa).

The protein belongs to the TrpF family.

It carries out the reaction N-(5-phospho-beta-D-ribosyl)anthranilate = 1-(2-carboxyphenylamino)-1-deoxy-D-ribulose 5-phosphate. Its pathway is amino-acid biosynthesis; L-tryptophan biosynthesis; L-tryptophan from chorismate: step 3/5. The chain is N-(5'-phosphoribosyl)anthranilate isomerase from Sulfurovum sp. (strain NBC37-1).